Reading from the N-terminus, the 380-residue chain is TPR repeat-containing thioredoxin TDX (380 aa).

Valine 2 is subject to N-acetylvaline. Basic and acidic residues predominate over residues 49–59 (TERDYEDKAET). The interval 49–115 (TERDYEDKAE…DENRDDAQSE (67 aa)) is disordered. Positions 69-91 (DDDDDIMESDVELDNSDVVEPDN) are enriched in acidic residues. Positions 106-115 (DENRDDAQSE) are enriched in basic and acidic residues. TPR repeat units follow at residues 112-145 (AQSEKSKAMEAISDGRFDEAIEHLTKAVMLNPTS), 147-179 (ILYATRASVFLKVKKPNAAIRDANVALQFNSDS), and 181-213 (KGYKSRGMAKAMLGQWEEAAADLHVASKLDYDE). The segment covering 240–263 (RKEKELQRAERERRKQQEAQEREA) has biased composition (basic and acidic residues). The disordered stretch occupies residues 240 to 265 (RKEKELQRAERERRKQQEAQEREAQA). In terms of domain architecture, Thioredoxin spans 252–378 (RRKQQEAQER…LEQKIAQHSS (127 aa)). Active-site nucleophile residues include cysteine 304 and cysteine 307. Cysteine 304 and cysteine 307 are joined by a disulfide.

It belongs to the thioredoxin family. In terms of assembly, oligomerization under high temperature.

Thiol-disulfide oxidoreductase that possesses insulin disulfide bonds reducing activity, disulfide reductase, foldase chaperone and holdase chaperone activities. Heat shock causes oligomerization and formation of high molecular weiht (HMW) complexes with concomitant functional switching from a disulfide reductase and foldase chaperone to a holdase chaperone. May interact with HSP70 proteins through the TPR repeats. The polypeptide is TPR repeat-containing thioredoxin TDX (TDX) (Arabidopsis thaliana (Mouse-ear cress)).